Here is a 409-residue protein sequence, read N- to C-terminus: G2/mitotic-specific cyclin-B (409 aa).

Belongs to the cyclin family. Cyclin AB subfamily. Interacts with the CDK1 protein kinase to form a serine/threonine kinase holoenzyme complex also known as maturation promoting factor (MPF). The cyclin subunit imparts substrate specificity to the complex.

Essential for the control of the cell cycle at the G2/M (mitosis) transition. The chain is G2/mitotic-specific cyclin-B from Arbacia punctulata (Punctuate sea urchin).